We begin with the raw amino-acid sequence, 20 residues long: Antimicrobial peptide EP-20 (20 aa).

Positions glutamate 1–proline 20 are disordered.

It localises to the secreted. Its function is as follows. The synthetic peptide inhibits growth of fungus P.capsici and partially that of V.dahliae, F.graminearum and F.omysporum. The protein is Antimicrobial peptide EP-20 of Xenorhabdus budapestensis.